The sequence spans 188 residues: RNA 2',3'-cyclic phosphodiesterase (188 aa).

The active-site Proton donor is the His-42. 2 consecutive short sequence motifs (HXTX) follow at residues 42–45 and 130–133; these read HMTL and HVTI. The Proton acceptor role is filled by His-130.

This sequence belongs to the 2H phosphoesterase superfamily. ThpR family.

It carries out the reaction a 3'-end 2',3'-cyclophospho-ribonucleotide-RNA + H2O = a 3'-end 2'-phospho-ribonucleotide-RNA + H(+). Hydrolyzes RNA 2',3'-cyclic phosphodiester to an RNA 2'-phosphomonoester. This Aquifex aeolicus (strain VF5) protein is RNA 2',3'-cyclic phosphodiesterase.